The primary structure comprises 217 residues: Twisted gastrulation protein homolog 1-A (217 aa).

The N-terminal stretch at 1-26 (MRPALFLCPVLISVLFLLSSLSLISG) is a signal peptide. N-linked (GlcNAc...) asparagine glycans are attached at residues Asn53 and Asn147.

It belongs to the twisted gastrulation protein family.

It localises to the secreted. In terms of biological role, involved in dorsal-ventral patterning. Appears to function predominantly as a ventralizing factor, through its actions as a BMP signaling agonist, acting through both chd-dependent and chd-independent mechanisms. May also antagonize BMP signaling, probably via formation of ternary complexes with chd and BMPs, resulting in dorsalization. In Danio rerio (Zebrafish), this protein is Twisted gastrulation protein homolog 1-A (twsg1a).